A 244-amino-acid polypeptide reads, in one-letter code: Salivary gland SP38-40.A protein (244 aa).

Positions 1–21 (MRIKFLVVLAVICLFAHYASA) are cleaved as a signal peptide. Disordered stretches follow at residues 23-91 (GMGG…EKKQ), 137-169 (PPPG…LRKE), and 206-244 (VQGK…DAKK). Composition is skewed to basic and acidic residues over residues 26–86 (GDKK…EVKK) and 157–169 (PPKE…LRKE). 2 repeat units span residues 29–34 (KPKDAP) and 35–40 (KPKDAP). The segment at 29 to 47 (KPKDAPKPKDAPKPKEVKP) is 3 X 6 AA approximate tandem repeats of K-P-K-D-A-P. Residues 41-47 (KPKEVKP) form a 1-3; approximate repeat. 2 tandem repeats follow at residues 156–159 (KPPK) and 161–164 (KPPK). The segment at 156–168 (KPPKEKPPKKLRK) is 3 X 4 AA approximate tandem repeats of K-P-P-K. The stretch at 165–168 (KLRK) is one 2-3; approximate repeat. Positions 209-224 (KQKKGAKKAKGGKKAA) are enriched in basic residues. 3 consecutive repeat copies span residues 225 to 228 (PKPG), 229 to 232 (PKPG), and 233 to 236 (PKQA). The segment at 225-240 (PKPGPKPGPKQADKPK) is 4 X 4 AA approximate tandem repeats of P-K-[PQ]-[GA]. Residues 235-244 (QADKPKDAKK) are compositionally biased toward basic and acidic residues. A 3-4; approximate repeat occupies 237 to 240 (DKPK).

In terms of tissue distribution, salivary gland.

It localises to the secreted. In terms of biological role, used by the larvae to construct a supramolecular structure, the larval tube. In Chironomus tentans (Midge), this protein is Salivary gland SP38-40.A protein (SP38-40.A).